The chain runs to 304 residues: MWFKNLTLYRFNKPFSIETEALETALADFTFSPCGSQDVSKFGFSNALGKKGSTLVHSANNRHLICVTKEEKILPAQVIKESLEEKVAQIEDEENRKLAKKEKDALKDEIITSLLPRAFSRRSQTRALILPELEMILVDSSSATKAEELLALLRKALGSLPVIPLSFKAPIESQLTEWLKNGSAPLPFEMQDEAELKSAADEGGIVRFKQQDLKEDEVLAHLETGKEVHKLALHFGQSIALLLQSDASVKRLKFSEEFRAGNDELGNEDPMARLDADFALMGSELVALMHALVSALGGIEETQA.

The protein belongs to the RdgC family.

Its subcellular location is the cytoplasm. It localises to the nucleoid. Functionally, may be involved in recombination. The polypeptide is Recombination-associated protein RdgC (Shewanella oneidensis (strain ATCC 700550 / JCM 31522 / CIP 106686 / LMG 19005 / NCIMB 14063 / MR-1)).